The primary structure comprises 385 residues: Phospho-N-acetylmuramoyl-pentapeptide-transferase (385 aa).

Transmembrane regions (helical) follow at residues 23-43, 79-99, 103-123, 135-155, 186-206, 218-238, 258-278, 282-302, 307-327, and 362-382; these read FITVRAALASITALGIALGAG, MGGIIILLSVGGATLLWGAVA, VWLSLVAMGGLGVVGFADDYV, AWYKVAGQVAVGLFVGSVLYF, LGVDLGWLVYLPVVVFIVTAV, GLTTGVTAFVSLGLVALVYVS, LTVFVAAVTAACFGFLWYNGY, VFMGDTGALALGGAVGSTILM, LLLPLLGIVYFAEALSVIVQT, and KIVTRFWIVTAITVIAALLIL.

This sequence belongs to the glycosyltransferase 4 family. MraY subfamily. Requires Mg(2+) as cofactor.

The protein localises to the cell inner membrane. It catalyses the reaction UDP-N-acetyl-alpha-D-muramoyl-L-alanyl-gamma-D-glutamyl-meso-2,6-diaminopimeloyl-D-alanyl-D-alanine + di-trans,octa-cis-undecaprenyl phosphate = di-trans,octa-cis-undecaprenyl diphospho-N-acetyl-alpha-D-muramoyl-L-alanyl-D-glutamyl-meso-2,6-diaminopimeloyl-D-alanyl-D-alanine + UMP. It functions in the pathway cell wall biogenesis; peptidoglycan biosynthesis. Catalyzes the initial step of the lipid cycle reactions in the biosynthesis of the cell wall peptidoglycan: transfers peptidoglycan precursor phospho-MurNAc-pentapeptide from UDP-MurNAc-pentapeptide onto the lipid carrier undecaprenyl phosphate, yielding undecaprenyl-pyrophosphoryl-MurNAc-pentapeptide, known as lipid I. The chain is Phospho-N-acetylmuramoyl-pentapeptide-transferase from Salinibacter ruber (strain DSM 13855 / M31).